The following is a 2201-amino-acid chain: MADSNLPPSSAAAPAPEPGITEQPGPRSPPPSPPGLEEPLEGTNPDVPHPDLAPVAFFCLRQTTSPRNWCIKMVCNPWFECVSMLVILLNCVTLGMYQPCDDMECLSDRCKILQVFDDFIFIFFAMEMVLKMVALGIFGKKCYLGDTWNRLDFFIVMAGMVEYSLDLQNINLSAIRTVRVLRPLKAINRVPSMRILVNLLLDTLPMLGNVLLLCFFVFFIFGIIGVQLWAGLLRNRCFLEENFTIQGDVALPPYYQPEEDDEMPFICSLTGDNGIMGCHEIPPLKEQGRECCLSKDDVYDFGAGRQDLNASGLCVNWNRYYNVCRTGNANPHKGAINFDNIGYAWIVIFQVITLEGWVEIMYYVMDAHSFYNFIYFILLIIVGSFFMINLCLVVIATQFSETKQREHRLMLEQRQRYLSSSTVASYAEPGDCYEEIFQYVCHILRKAKRRALGLYQALQNRRQAMGPGTPAPAKPGPHAKEPSHCKLCPRHSPLDPTPHTLVQPISAILASDPSSCPHCQHEAGRRPSGLGSTDSGQEGSGSGGSAEAEANGDGPQSSEDGVSSDLGKEEEQEDGAARLCGDVWRETREKLRGIVDSKYFNRGIMMAILVNTVSMGIEHHEQPEELTNILEICNVVFTSMFALEMILKLAAFGLFDYLRNPYNIFDSIIVIISIWEIVGQADGGLSVLRTFRLLRVLKLVRFMPALRRQLVVLMKTMDNVATFCMLLMLFIFIFSILGMHIFGCKFSLRTDTGDTVPDRKNFDSLLWAIVTVFQILTQEDWNVVLYNGMASTTPWASLYFVALMTFGNYVLFNLLVAILVEGFQAEGDANRSYSDEDQSSSNLEEFDKLPEGLDNSRDLKLCPIPMTPNGHLDPSLPLGAHLGPAGTMGTAPRLSLQPDPVLVALDSRKSSVMSLGRMSYDQRSLSSSRSSYYGPWGRSGTWASRRSSWNSLKHKPPSAEHESLLSGEGGGSCVRACEGAREEAPTRTAPLHAPHAHHAHHGPHLAHRHRHHRRTLSLDTRDSVDLGELVPVVGAHSRAAWRGAGQAPGHEDCNGRMPNIAKDVFTKMDDCRDRGEDEEEIDYTLCFRVRKMIDVYKPDWCEVREDWSVYLFSPENKFRILCQTIIAHKLFDYVVLAFIFLNCITIALERPQIEAGSTERIFLTVSNYIFTAIFVGEMTLKVVSLGLYFGEQAYLRSSWNVLDGFLVFVSIIDIVVSVASAGGAKILGVLRVLRLLRTLRPLRVISRAPGLKLVVETLISSLKPIGNIVLICCAFFIIFGILGVQLFKGKFYHCLGVDTRNITNRSDCVAANYRWVHHKYNFDNLGQALMSLFVLASKDGWVNIMYNGLDAVAVDQQPVTNHNPWMLLYFISFLLIVSFFVLNMFVGVVVENFHKCRQHQEAEEARRREEKRLRRLEKKRRKAQRLPYYATYCPTRLLIHSMCTSHYLDIFITFIICLNVVTMSLEHYNQPTSLETALKYCNYMFTTVFVLEAVLKLVAFGLRRFFKDRWNQLDLAIVLLSVMGITLEEIEINAALPINPTIIRIMRVLRIARVLKLLKMATGMRALLDTVVQALPQVGNLGLLFMLLFFIYAALGVELFGKLVCNDENPCEGMSRHATFENFGMAFLTLFQVSTGDNWNGIMKDTLRDCTHDERSCLSSLQFVSPLYFVSFVLTAQFVLINVVVAVLMKHLDDSNKEAQEDAEMDAEIELEMAHGLGPCPGPCPGPCPCPWPLAPVLARGCPLVLLGATGARIGRGRCWRRHRESPVPSTRYSPAQETLWLDSVSLIIKDSLEGELTIIDNLSGSVFHHYASPDGCGKCHHDKQEVQLAETEAFSLNSDRSSSILLGDDLSLEDPTACPPGRKDSKGELDPPEPMRVGDLGECFFPLSSTAVSPDPENFLCEMEEIPFNPVQSWLKHDSSQAPPSPFSPDGSSPLLQMPAEFFHPAVSASQKGPEKGTGTGTLPKIALQGSWASLRSPSVNCTLLRQATGSDTSLDASPSSSAGSLQTTLEDSLTLSDSPRRALGPPVQVPGPRASLSPATRRRLSLRGRGLFSLRGLRAHQRSHSSGGSTSPGCTHHDSMDPSDEEGRGGAGGGGAGSEHSETLSSLSLTSLFCLPPTLPPPGLTPARKFNSTSSLAAGPGRPGSTVSARGLVRSPSWAADRSKDPPGQAQLVSGLGSSAPGPQPPPGESTDAASKRKR.

Residues Met-1 to Pro-45 form a disordered region. The Cytoplasmic portion of the chain corresponds to Met-1–Asn-76. Positions Pro-26–Leu-36 are enriched in pro residues. The stretch at Thr-64–Phe-399 is one I repeat. Residues Pro-77–Tyr-97 traverse the membrane as a helical segment. Over Gln-98 to Val-115 the chain is Extracellular. The helical transmembrane segment at Phe-116–Ile-137 threads the bilayer. Topologically, residues Phe-138–Asp-146 are cytoplasmic. The helical transmembrane segment at Thr-147 to Asp-166 threads the bilayer. Topologically, residues Leu-167–Asn-171 are extracellular. The N-linked (GlcNAc...) asparagine glycan is linked to Asn-171. The chain crosses the membrane as a helical span at residues Leu-172 to Arg-189. The Cytoplasmic segment spans residues Val-190–Asn-209. A helical transmembrane segment spans residues Val-210 to Ala-230. At Gly-231–Tyr-371 the chain is on the extracellular side. 2 N-linked (GlcNAc...) asparagine glycosylation sites follow: Asn-242 and Asn-309. The chain crosses the membrane as a helical span at residues Asn-372–Ala-396. Residues Thr-397–Lys-598 are Cytoplasmic-facing. Disordered stretches follow at residues Gln-463–Thr-500 and Pro-513–Leu-579. A compositionally biased stretch (low complexity) spans Ser-545–Gly-554. The stretch at Trp-584–Phe-823 is one II repeat. Residues Tyr-599–His-619 traverse the membrane as a helical segment. The Extracellular segment spans residues His-620 to Ile-632. The chain crosses the membrane as a helical span at residues Cys-633–Leu-654. Over Phe-655 to Asn-660 the chain is Cytoplasmic. A helical transmembrane segment spans residues Pro-661–Gly-679. Residues Gln-680 to Val-687 lie on the Extracellular side of the membrane. The chain crosses the membrane as a helical span at residues Leu-688–Val-711. Over Val-712–Thr-722 the chain is Cytoplasmic. The chain crosses the membrane as a helical span at residues Phe-723 to Gly-743. Residues Cys-744–Trp-795 are Extracellular-facing. The chain crosses the membrane as a helical span at residues Ala-796–Val-820. At Glu-821–Ile-1125 the chain is on the cytoplasmic side. Residues Trp-936 to Gly-969 are disordered. Positions Thr-941–Ser-951 are enriched in polar residues. Ser-1017 is modified (phosphoserine). The stretch at Asn-1116–Phe-1393 is one III repeat. Residues Ile-1126–Leu-1148 traverse the membrane as a helical segment. Residues Glu-1149–Ser-1166 lie on the Extracellular side of the membrane. The helical transmembrane segment at Asn-1167–Leu-1187 threads the bilayer. Residues Tyr-1188–Ser-1197 lie on the Cytoplasmic side of the membrane. The helical transmembrane segment at Ser-1198–Ser-1217 threads the bilayer. The Extracellular portion of the chain corresponds to Val-1218–Arg-1231. The helical transmembrane segment at Val-1232–Leu-1253 threads the bilayer. The Cytoplasmic portion of the chain corresponds to Val-1254–Lys-1263. Residues Pro-1264 to Phe-1287 traverse the membrane as a helical segment. At Lys-1288–Pro-1364 the chain is on the extracellular side. Residues Asn-1301 and Asn-1304 are each glycosylated (N-linked (GlcNAc...) asparagine). Residues Trp-1365–Val-1390 form a helical membrane-spanning segment. Residues Glu-1391–Ser-1445 are Cytoplasmic-facing. One copy of the IV repeat lies at Thr-1431–Leu-1692. The chain crosses the membrane as a helical span at residues His-1446–Glu-1466. Residues His-1467 to Tyr-1480 are Extracellular-facing. A helical transmembrane segment spans residues Cys-1481–Leu-1502. Residues Arg-1503–Arg-1509 lie on the Cytoplasmic side of the membrane. A helical membrane pass occupies residues Trp-1510 to Glu-1528. Over Glu-1529–Ile-1542 the chain is Extracellular. A helical membrane pass occupies residues Ile-1543–Ala-1566. Topologically, residues Leu-1567–Asn-1580 are cytoplasmic. Residues Leu-1581 to Gly-1601 traverse the membrane as a helical segment. Over Lys-1602–Val-1664 the chain is Extracellular. Residues Ser-1665–Leu-1692 traverse the membrane as a helical segment. Topologically, residues Asp-1693 to Phe-1835 are cytoplasmic. Disordered regions lie at residues Leu-1846–Met-1876, Leu-1916–Gln-1938, Ser-1992–Arg-2045, Arg-2057–Thr-2105, and Leu-2126–Arg-2201. Positions Ser-1992–Leu-2007 are enriched in low complexity. 2 stretches are compositionally biased toward polar residues: residues Gln-2008–Asp-2019 and His-2066–Gly-2075. Basic and acidic residues predominate over residues Thr-2077–Arg-2090.

This sequence belongs to the calcium channel alpha-1 subunit (TC 1.A.1.11) family. CACNA1I subfamily. In terms of assembly, interacts with CATSPER1 and CATSPER2, leading to suppress T-type calcium channel activity. In terms of processing, in response to raising of intracellular calcium, the T-type channels are activated by CaM-kinase II. In terms of tissue distribution, brain.

Its subcellular location is the membrane. It catalyses the reaction Ca(2+)(in) = Ca(2+)(out). In terms of biological role, voltage-sensitive calcium channels (VSCC) mediate the entry of calcium ions into excitable cells and are also involved in a variety of calcium-dependent processes, including muscle contraction, hormone or neurotransmitter release, gene expression, cell motility, cell division and cell death. This channel gives rise to T-type calcium currents. T-type calcium channels belong to the 'low-voltage activated (LVA)' group and are strongly blocked by nickel and mibefradil. A particularity of this type of channels is an opening at quite negative potentials, and a voltage-dependent inactivation. T-type channels serve pacemaking functions in both central neurons and cardiac nodal cells and support calcium signaling in secretory cells and vascular smooth muscle. They may also be involved in the modulation of firing patterns of neurons which is important for information processing as well as in cell growth processes. Gates in voltage ranges similar to, but higher than alpha 1G or alpha 1H. Its function is as follows. Voltage-sensitive calcium channels (VSCC) mediate the entry of calcium ions into excitable cells and are also involved in a variety of calcium-dependent processes, including muscle contraction, hormone or neurotransmitter release, gene expression, cell motility, cell division and cell death. This channel gives rise to T-type calcium currents. The protein is Voltage-dependent T-type calcium channel subunit alpha-1I (Cacna1i) of Rattus norvegicus (Rat).